The primary structure comprises 209 residues: Urease accessory protein UreG (209 aa).

A GTP-binding site is contributed by 11-18; that stretch reads GPVGSGKT.

Belongs to the SIMIBI class G3E GTPase family. UreG subfamily. Homodimer. UreD, UreF and UreG form a complex that acts as a GTP-hydrolysis-dependent molecular chaperone, activating the urease apoprotein by helping to assemble the nickel containing metallocenter of UreC. The UreE protein probably delivers the nickel.

The protein localises to the cytoplasm. Facilitates the functional incorporation of the urease nickel metallocenter. This process requires GTP hydrolysis, probably effectuated by UreG. This chain is Urease accessory protein UreG, found in Edwardsiella ictaluri (strain 93-146).